A 308-amino-acid chain; its full sequence is Cobalamin biosynthesis protein CobD (308 aa).

A run of 6 helical transmembrane segments spans residues 1–21, 50–70, 71–91, 151–171, 202–222, and 284–304; these read MEIL…GDPP, FVYG…PVYF, LLDW…AILF, IGDG…PGVM, VLNF…SFFG, and LVLI…VIYF.

This sequence belongs to the CobD/CbiB family.

It localises to the cell membrane. The protein operates within cofactor biosynthesis; adenosylcobalamin biosynthesis. Its function is as follows. Converts cobyric acid to cobinamide by the addition of aminopropanol on the F carboxylic group. The sequence is that of Cobalamin biosynthesis protein CobD from Dehalococcoides mccartyi (strain CBDB1).